A 789-amino-acid polypeptide reads, in one-letter code: Disintegrin and metalloproteinase domain-containing protein 1 (789 aa).

The first 68 residues, 1–68 (MSVAASASRS…LLIFLPSTLC (68 aa)), serve as a signal peptide directing secretion. In terms of domain architecture, Peptidase M12B spans 238 to 432 (KYVEMFVVVN…HRGACLLDRP (195 aa)). A glycan (N-linked (GlcNAc...) asparagine) is linked at Asn259. 4 cysteine pairs are disulfide-bonded: Cys348-Cys427, Cys388-Cys411, Cys390-Cys396, and Cys497-Cys517. Zn(2+) is bound at residue His373. Glu374 is a catalytic residue. Zn(2+)-binding residues include His377 and His383. Residue Asn410 is glycosylated (N-linked (GlcNAc...) asparagine). A Disintegrin domain is found at 441–525 (DAHCGNGVVE…ECPANSYMQD (85 aa)). Residue Asn633 is glycosylated (N-linked (GlcNAc...) asparagine). Residues 666–700 (LQYDCHPQEMCHGNGVCNNFKHCHCDAGFSPPDCS) form the EGF-like domain. Intrachain disulfides connect Cys670–Cys682, Cys676–Cys688, and Cys690–Cys699. N-linked (GlcNAc...) asparagine glycosylation is present at Asn720. A helical membrane pass occupies residues 743 to 763 (VVVLVVPIFLIVLLCCLMLIA). Topologically, residues 764–789 (YLWSEVQEAVSPGSSSTTSSSESESD) are cytoplasmic.

Heterodimer with ADAM2/fertilin subunit beta.

The protein resides in the membrane. Its function is as follows. May be involved in sperm-egg fusion. This Rattus norvegicus (Rat) protein is Disintegrin and metalloproteinase domain-containing protein 1 (Adam1).